Consider the following 204-residue polypeptide: Fluoride-specific ion channel FluC 3 (204 aa).

Over residues 1 to 16 (MRADESGPERESREPT) the composition is skewed to basic and acidic residues. The tract at residues 1 to 53 (MRADESGPERESREPTHIPGAEPELGGEPTPRGEPGPGFEPGPGGEPAPSRAP) is disordered. Residues 32 to 46 (RGEPGPGFEPGPGGE) are compositionally biased toward pro residues. Transmembrane regions (helical) follow at residues 62–82 (VLAA…ALGL), 96–116 (FAVN…VLEI), 125–145 (PFAA…MVDT), and 158–178 (AFNV…GLAI). Residues G133 and T136 each contribute to the Na(+) site.

The protein belongs to the fluoride channel Fluc/FEX (TC 1.A.43) family.

It localises to the cell membrane. It catalyses the reaction fluoride(in) = fluoride(out). Its activity is regulated as follows. Na(+) is not transported, but it plays an essential structural role and its presence is essential for fluoride channel function. Fluoride-specific ion channel. Important for reducing fluoride concentration in the cell, thus reducing its toxicity. The chain is Fluoride-specific ion channel FluC 3 from Streptomyces avermitilis (strain ATCC 31267 / DSM 46492 / JCM 5070 / NBRC 14893 / NCIMB 12804 / NRRL 8165 / MA-4680).